The chain runs to 390 residues: Neutrophil cytosol factor 1 (390 aa).

In terms of domain architecture, PX spans 4 to 125 (TFIRHIALLG…DFFKVRPDDL (122 aa)). 2 SH3 domains span residues 156–215 (IILQ…PLDS) and 226–285 (YAGE…KSGQ). The interval 285 to 390 (QDVSQAQRQI…STKRKLASAV (106 aa)) is disordered. Residues serine 303 and serine 304 each carry the phosphoserine modification. Over residues 309 to 318 (HSIHQRSRKR) the composition is skewed to basic residues. 4 positions are modified to phosphoserine: serine 320, serine 328, serine 345, and serine 348.

Component of the phagocyte NADPH oxidase complex composed of an obligatory core heterodimer formed by the membrane proteins CYBA and CYBB and the cytosolic regulatory subunits NCF1/p47-phox, NCF2/p67-phox, NCF4/p40-phox and the small GTPase RAC1 or RAC2. Part of a cytosolic complex composed at least by NCF1, NCF2 and NCF4. Interacts (via C-terminus) with NCF2 (via the C-terminal SH3 domain). Interacts with NCF4. Interacts with CYBB. Interacts (via the second SH3 domain) with CYBA; interaction is phosphorylation-dependent. Interacts with NOXA1. Interacts with ADAM15. Interacts with TRAF4. Interacts with FASLG. Interacts with PARK7 (via C-terminus); the interaction is enhanced by LPS and modulates NCF1 phosphorylation and membrane translocation. Phosphorylated by PRKCD; phosphorylation induces activation of NCF1, leading to assembly and activation of the NADPH oxidase complex. Detected in peripheral blood monocytes and neutrophils (at protein level).

The protein resides in the cytoplasm. It is found in the cytosol. Its subcellular location is the membrane. In terms of biological role, subunit of the phagocyte NADPH oxidase complex that mediates the transfer of electrons from cytosolic NADPH to O2 to produce the superoxide anion (O2(-)). In the activated complex, electrons are first transferred from NADPH to flavin adenine dinucleotide (FAD) and subsequently transferred via two heme molecules to molecular oxygen, producing superoxide through an outer-sphere reaction. Activation of the NADPH oxidase complex is initiated by the assembly of cytosolic subunits of the NADPH oxidase complex with the core NADPH oxidase complex to form a complex at the plasma membrane or phagosomal membrane. This activation process is initiated by phosphorylation dependent binding of the cytosolic NCF1/p47-phox subunit to the C-terminus of CYBA/p22-phox. The polypeptide is Neutrophil cytosol factor 1 (Homo sapiens (Human)).